The sequence spans 186 residues: Large ribosomal subunit protein uL5 (186 aa).

The protein belongs to the universal ribosomal protein uL5 family. In terms of assembly, part of the 50S ribosomal subunit; part of the 5S rRNA/L5/L18/L25 subcomplex. Contacts the 5S rRNA and the P site tRNA. Forms a bridge to the 30S subunit in the 70S ribosome.

This is one of the proteins that bind and probably mediate the attachment of the 5S RNA into the large ribosomal subunit, where it forms part of the central protuberance. In the 70S ribosome it contacts protein S13 of the 30S subunit (bridge B1b), connecting the 2 subunits; this bridge is implicated in subunit movement. Contacts the P site tRNA; the 5S rRNA and some of its associated proteins might help stabilize positioning of ribosome-bound tRNAs. The polypeptide is Large ribosomal subunit protein uL5 (Cereibacter sphaeroides (strain ATCC 17023 / DSM 158 / JCM 6121 / CCUG 31486 / LMG 2827 / NBRC 12203 / NCIMB 8253 / ATH 2.4.1.) (Rhodobacter sphaeroides)).